We begin with the raw amino-acid sequence, 485 residues long: ATP-dependent 6-phosphofructokinase (485 aa).

ATP contacts are provided by residues Gly-105, 171–172, and 196–199; these read RG and GDGT. Asp-197 provides a ligand contact to Mg(2+). Residues 225-227, 270-272, Glu-323, and 378-381 contribute to the substrate site; these read TID, MGR, and YMIR. Residue Asp-227 is the Proton acceptor of the active site. The Peroxisomal targeting signal motif lies at 483–485; it reads SKL.

This sequence belongs to the phosphofructokinase type A (PFKA) family. PPi-dependent PFK group II subfamily. Atypical ATP-dependent clade 'X' sub-subfamily. In terms of assembly, homotetramer. Mg(2+) is required as a cofactor.

It localises to the glycosome. It carries out the reaction beta-D-fructose 6-phosphate + ATP = beta-D-fructose 1,6-bisphosphate + ADP + H(+). The protein operates within carbohydrate degradation; glycolysis; D-glyceraldehyde 3-phosphate and glycerone phosphate from D-glucose: step 3/4. With respect to regulation, allosterically activated by AMP. Catalyzes the phosphorylation of D-fructose 6-phosphate to fructose 1,6-bisphosphate by ATP, the first committing step of glycolysis. In Trypanosoma cruzi (strain CL Brener), this protein is ATP-dependent 6-phosphofructokinase.